Consider the following 226-residue polypeptide: MLLHIPEVLNGQELATLRETLAGADWQDGAATAGAQAVRVKQNLQLPAGAPDARPMGELVKAALLRHPLFQSAALPHTVLTPRFNRYEGGGHYGNHVDSAIHADPFLGVSVRTDVSTTVFLNDPEDYDGGELIVEDTYGVHEVKLPAGDAILYPATSLHRVESVTRGTRLASFLWTQSRVRDDARRGMLFQLDMTILSLRGKLADAPEVVALTGHYHNLLRQWADA.

Positions threonine 78 to serine 178 constitute a Fe2OG dioxygenase domain. Fe cation contacts are provided by histidine 96, aspartate 98, and histidine 159. Position 169 (arginine 169) interacts with 2-oxoglutarate.

Fe(2+) serves as cofactor. The cofactor is L-ascorbate.

This is PKHD-type hydroxylase HNE_2117 from Hyphomonas neptunium (strain ATCC 15444).